We begin with the raw amino-acid sequence, 420 residues long: Aminoacyltransferase FemA (420 aa).

The protein belongs to the FemABX family. Homodimer. Interacts with FemB.

The protein localises to the cytoplasm. The enzyme catalyses beta-D-GlcNAc-(1-&gt;4)-Mur2Ac(oyl-L-Ala-D-isoglutaminyl-L-Lys-(N(6)-Gly)-D-Ala-D-Ala)-di-trans,octa-cis-undecaprenyl diphosphate + 2 glycyl-tRNA(Gly) = MurNAc-L-Ala-D-isoglutaminyl-L-Lys-(N(6)-tri-Gly)-D-Ala-D-Ala-diphospho-di-trans,octa-cis-undecaprenyl-GlcNAc + 2 tRNA(Gly) + 2 H(+). Catalyzes the formation of the pentaglycine interpeptide bridge, which is characteristic of the S.aureus peptidoglycan. Adds glycines 2 and 3 of the pentaglycine bridge, using glycyl-tRNA(Gly) as donor. Involved in resistance to methicillin. This chain is Aminoacyltransferase FemA (femA), found in Staphylococcus aureus (strain MRSA252).